We begin with the raw amino-acid sequence, 368 residues long: Anhydro-N-acetylmuramic acid kinase (368 aa).

13–20 (GTSLDGVD) is a binding site for ATP.

Belongs to the anhydro-N-acetylmuramic acid kinase family.

The catalysed reaction is 1,6-anhydro-N-acetyl-beta-muramate + ATP + H2O = N-acetyl-D-muramate 6-phosphate + ADP + H(+). It participates in amino-sugar metabolism; 1,6-anhydro-N-acetylmuramate degradation. It functions in the pathway cell wall biogenesis; peptidoglycan recycling. Functionally, catalyzes the specific phosphorylation of 1,6-anhydro-N-acetylmuramic acid (anhMurNAc) with the simultaneous cleavage of the 1,6-anhydro ring, generating MurNAc-6-P. Is required for the utilization of anhMurNAc either imported from the medium or derived from its own cell wall murein, and thus plays a role in cell wall recycling. The sequence is that of Anhydro-N-acetylmuramic acid kinase from Hahella chejuensis (strain KCTC 2396).